The primary structure comprises 404 residues: Argininosuccinate synthase (404 aa).

ATP-binding positions include 12–20 (AYSGGLDTS) and alanine 40. Residues tyrosine 92 and serine 97 each coordinate L-citrulline. Position 122 (glycine 122) interacts with ATP. Threonine 124, asparagine 128, and aspartate 129 together coordinate L-aspartate. Asparagine 128 contributes to the L-citrulline binding site. L-citrulline is bound by residues arginine 132, serine 181, serine 190, glutamate 266, and tyrosine 278.

Belongs to the argininosuccinate synthase family. Type 1 subfamily. In terms of assembly, homotetramer.

Its subcellular location is the cytoplasm. The enzyme catalyses L-citrulline + L-aspartate + ATP = 2-(N(omega)-L-arginino)succinate + AMP + diphosphate + H(+). The protein operates within amino-acid biosynthesis; L-arginine biosynthesis; L-arginine from L-ornithine and carbamoyl phosphate: step 2/3. In Photorhabdus laumondii subsp. laumondii (strain DSM 15139 / CIP 105565 / TT01) (Photorhabdus luminescens subsp. laumondii), this protein is Argininosuccinate synthase.